A 358-amino-acid polypeptide reads, in one-letter code: WD repeat-containing protein 53 (358 aa).

6 WD repeats span residues 1–38 (MAVK…AWGE), 43–80 (LGHT…VLDV), 85–123 (DSLD…ILDL), 127–166 (KVIR…LWSL), 173–225 (WITN…RIFR), and 232–270 (EQEL…LWDA). Positions 273 to 311 (EVEKKQKSPTKRTHRKKPKRGTCTKQGGNTNASVTDEEE) are disordered. Residues 279–294 (KSPTKRTHRKKPKRGT) show a composition bias toward basic residues. Over residues 295–306 (CTKQGGNTNASV) the composition is skewed to polar residues. A WD 7 repeat occupies 314–355 (NILPKLNIEHGEKVNWLLGTKIKGHQNILVADQTSCISVYPL).

Belongs to the WD repeat WDR53 family.

This Homo sapiens (Human) protein is WD repeat-containing protein 53 (WDR53).